Reading from the N-terminus, the 965-residue chain is Probable ion channel POLLUX (965 aa).

Residues M1–P11 are compositionally biased toward low complexity. Disordered regions lie at residues M1–G76 and G108–A158. Positions L32–A42 are enriched in polar residues. Composition is skewed to low complexity over residues S52–A66 and R118–S149. A run of 4 helical transmembrane segments spans residues L187 to W207, A251 to V271, L317 to V337, and I369 to V389. 2 RCK N-terminal domains span residues V410–V551 and P670–I818.

It belongs to the castor/pollux (TC 1.A.1.23) family. Expressed in roots, leaves, stems and panicles.

It localises to the nucleus membrane. Its function is as follows. Required for mycorrhizal symbiosis. This chain is Probable ion channel POLLUX, found in Oryza sativa subsp. japonica (Rice).